We begin with the raw amino-acid sequence, 508 residues long: E3 ubiquitin-protein ligase XBAT32 (508 aa).

ANK repeat units follow at residues 50–79 (VRNS…DINL), 83–112 (RGQT…NIHR), 117–147 (NGGT…SVPN), 177–206 (GGIT…SVTQ), and 220–249 (AGST…CLAA). The RING-type zinc-finger motif lies at 321–372 (CAVCLERKCTVAADGCAHEFCTNCALYLSTTSITSSKTSNVTPGSVPCPLCR).

As to quaternary structure, interacts with ACS4 and ACS7. Expressed in the vascular system of primary root, vascular tissue of leaves, stems and anthers.

The catalysed reaction is S-ubiquitinyl-[E2 ubiquitin-conjugating enzyme]-L-cysteine + [acceptor protein]-L-lysine = [E2 ubiquitin-conjugating enzyme]-L-cysteine + N(6)-ubiquitinyl-[acceptor protein]-L-lysine.. It functions in the pathway protein modification; protein ubiquitination. In terms of biological role, E3 ubiquitin-protein ligase that mediates ubiquitination of ACC synthases (ACS). Negatively regulates ethylene biosynthesis probably via ubiquitin-dependent degradation of ACS4 and ACS7 enzymes. Regulates lateral root formation and development by controlling ethylene production which inhibits lateral root formation at high concentration. This Arabidopsis thaliana (Mouse-ear cress) protein is E3 ubiquitin-protein ligase XBAT32 (XBAT32).